The primary structure comprises 655 residues: T-lymphocyte surface antigen Ly-9 (655 aa).

A signal peptide spans 1–47; that stretch reads MVAPKSHTDDWAPGPFSSKPQRSQLQIFSSVLQTSLLFLLMGLRASG. The 111-residue stretch at 48–158 folds into the Ig-like V-type 1 domain; that stretch reads KDSAPTVVSG…FVYEQLQEPQ (111 aa). Topologically, residues 48–454 are extracellular; it reads KDSAPTVVSG…ICSGPERNTK (407 aa). N-linked (GlcNAc...) asparagine glycosylation is found at asparagine 68, asparagine 95, asparagine 120, asparagine 169, and asparagine 173. An Ig-like C2-type 1 domain is found at 159–235; sequence VTMKSVKVSE…NPVSQRSSLP (77 aa). 2 disulfide bridges follow: cysteine 172-cysteine 242 and cysteine 178-cysteine 222. The 113-residue stretch at 251–363 folds into the Ig-like V-type 2 domain; that stretch reads GTTGETVVGV…LLIYRRLRKP (113 aa). Asparagine 285, asparagine 413, and asparagine 424 each carry an N-linked (GlcNAc...) asparagine glycan. One can recognise an Ig-like C2-type 2 domain in the interval 364 to 452; sequence KITWSLRHSE…ENICSGPERN (89 aa). Cystine bridges form between cysteine 377–cysteine 446 and cysteine 383–cysteine 427. A helical transmembrane segment spans residues 455–476; it reads LWIGLFLMVCLLCVGIFSWCIW. Topologically, residues 477 to 655 are cytoplasmic; it reads KRKGRCSVPA…PESPTYENFT (179 aa). Positions 521-556 are disordered; that stretch reads PLRPARQQPTPTSDSSSDSNLTTEEDEDRPEVHKPI. The span at 530–542 shows a compositional bias: low complexity; that stretch reads TPTSDSSSDSNLT. Short sequence motifs (ITSM) lie at residues 601–606 and 624–629; these read TMYAQV and TIYCSI. A Phosphotyrosine modification is found at tyrosine 603. Residues 633-655 form a disordered region; sequence QVVPPPQQNDLEIPESPTYENFT.

Interacts with SH2D1A, SH2D1B and INPP5D. Interacts (via phosphorylated cytoplasmic domain) with PTPN11; the interaction is blocked by SH2D1A. In terms of tissue distribution, increased surface expression on T-cells of systemic lupus erythematosus (SLE) patients.

The protein resides in the membrane. Its subcellular location is the cell membrane. Functionally, self-ligand receptor of the signaling lymphocytic activation molecule (SLAM) family. SLAM receptors triggered by homo- or heterotypic cell-cell interactions are modulating the activation and differentiation of a wide variety of immune cells and thus are involved in the regulation and interconnection of both innate and adaptive immune response. Activities are controlled by presence or absence of small cytoplasmic adapter proteins, SH2D1A/SAP and/or SH2D1B/EAT-2. May participate in adhesion reactions between T lymphocytes and accessory cells by homophilic interaction. Promotes T-cell differentiation into a helper T-cell Th17 phenotype leading to increased IL-17 secretion; the costimulatory activity requires SH2D1A. Promotes recruitment of RORC to the IL-17 promoter. May be involved in the maintenance of peripheral cell tolerance by serving as a negative regulator of the immune response. May disable autoantibody responses and inhibit IFN-gamma secretion by CD4(+) T-cells. May negatively regulate the size of thymic innate CD8(+) T-cells and the development of invariant natural killer T (iNKT) cells. The sequence is that of T-lymphocyte surface antigen Ly-9 (LY9) from Homo sapiens (Human).